The primary structure comprises 820 residues: Protein O-mannosyl-transferase 2 (820 aa).

The helical transmembrane segment at 124–144 (AAGWWATLAVVTLLSFATRFH) threads the bilayer. N-linked (GlcNAc...) asparagine glycosylation is present at N168. 5 consecutive transmembrane segments (helical) span residues 170–190 (TFFF…AGYL), 216–236 (GFCA…VLDL), 261–281 (QYIL…LSMV), 301–321 (LTGI…FIIV), and 353–373 (ILCL…VHVM). 2 N-linked (GlcNAc...) asparagine glycosylation sites follow: N376 and N400. 3 MIR domains span residues 404–460 (PEHL…IKKY), 473–529 (VEFV…IEVV), and 534–591 (GNRI…IEEH). A glycan (N-linked (GlcNAc...) asparagine) is linked at N515. N598 and N653 each carry an N-linked (GlcNAc...) asparagine glycan. The next 4 helical transmembrane spans lie at 659–679 (VYLL…VLYL), 713–733 (LLLG…ILYF), 735–755 (HYFP…DTLL), and 774–794 (VGIL…HPLA).

The protein belongs to the glycosyltransferase 39 family. N-glycosylated. In terms of tissue distribution, ubiquitous. Highly expressed in the acrosome of cap phase spermatids, in spermatocytes and liver. Isoform 1 seems to be testis-specific.

It is found in the endoplasmic reticulum membrane. The catalysed reaction is a di-trans,poly-cis-dolichyl beta-D-mannosyl phosphate + L-seryl-[protein] = 3-O-(alpha-D-mannosyl)-L-seryl-[protein] + a di-trans,poly-cis-dolichyl phosphate + H(+). It catalyses the reaction a di-trans,poly-cis-dolichyl beta-D-mannosyl phosphate + L-threonyl-[protein] = 3-O-(alpha-D-mannosyl)-L-threonyl-[protein] + a di-trans,poly-cis-dolichyl phosphate + H(+). Its pathway is protein modification; protein glycosylation. Functionally, transfers mannosyl residues to the hydroxyl group of serine or threonine residues. Coexpression of both POMT1 and POMT2 is necessary for enzyme activity, expression of either POMT1 or POMT2 alone is insufficient. Essentially dedicated to O-mannosylation of alpha-DAG1 and few other proteins but not of cadherins and protocaherins. This Mus musculus (Mouse) protein is Protein O-mannosyl-transferase 2 (Pomt2).